Consider the following 274-residue polypeptide: Cytochrome b-c1 complex subunit Rieske, mitochondrial (274 aa).

The tract at residues 29 to 49 (XXXXXXXXTPEPPVLDPKRPI) is disordered. Residues 79 to 103 (SHTDIKVPDFSDYRRSEVLDKTKSS) lie on the Mitochondrial matrix side of the membrane. The helical transmembrane segment at 104–140 (RESSDARKVFSYMVTATTAVGVTYAAKSIVTQFISSM) threads the bilayer. The Mitochondrial intermembrane segment spans residues 141 to 274 (SASADVLAMS…FLSDDMVVVG (134 aa)). The Rieske domain maps to 187–272 (EAAVELSQLR…YEFLSDDMVV (86 aa)). [2Fe-2S] cluster contacts are provided by Cys-217, His-219, Cys-236, His-239, and Ser-241. Cys-222 and Cys-238 are oxidised to a cystine.

Belongs to the Rieske iron-sulfur protein family. In terms of assembly, component of the ubiquinol-cytochrome c oxidoreductase (cytochrome b-c1 complex, complex III, CIII), a multisubunit enzyme composed of 11 subunits. The complex is composed of 3 respiratory subunits cytochrome b, cytochrome c1 and Rieske protein UQCRFS1, 2 core protein subunits UQCRC1/QCR1 and UQCRC2/QCR2, and 6 low-molecular weight protein subunits UQCRH/QCR6, UQCRB/QCR7, UQCRQ/QCR8, UQCR10/QCR9, UQCR11/QCR10 and subunit 9, the cleavage product of Rieske protein UQCRFS1. The complex exists as an obligatory dimer and forms supercomplexes (SCs) in the inner mitochondrial membrane with NADH-ubiquinone oxidoreductase (complex I, CI) and cytochrome c oxidase (complex IV, CIV), resulting in different assemblies (supercomplex SCI(1)III(2)IV(1) and megacomplex MCI(2)III(2)IV(2)). Incorporation of the Rieske protein UQCRFS1 is the penultimate step in complex III assembly. Interacts with TTC19, which is involved in the clearance of UQCRFS1 fragments. Component of the ubiquinol-cytochrome c oxidoreductase (cytochrome b-c1 complex, complex III, CIII). Subunit 9 corresponds to the mitochondrial targeting sequence (MTS) of Rieske protein UQCRFS1. It is retained after processing and incorporated inside complex III, where it remains bound to the complex and localizes between the 2 core subunits UQCRC1/QCR1 and UQCRC2/QCR2. [2Fe-2S] cluster is required as a cofactor. Post-translationally, proteolytic processing is necessary for the correct insertion of UQCRFS1 in the complex III dimer. Several fragments are generated during UQCRFS1 insertion, most probably due to the endogenous matrix-processing peptidase (MPP) activity of the 2 core protein subunits UQCRC1/QCR1 and UQCRC2/QCR2, which are homologous to the 2 mitochondrial-processing peptidase (MPP) subunits beta-MPP and alpha-MPP respectively. The action of the protease is also necessary for the clearance of the UQCRFS1 fragments.

Its subcellular location is the mitochondrion inner membrane. The catalysed reaction is a quinol + 2 Fe(III)-[cytochrome c](out) = a quinone + 2 Fe(II)-[cytochrome c](out) + 2 H(+)(out). Its function is as follows. Component of the ubiquinol-cytochrome c oxidoreductase, a multisubunit transmembrane complex that is part of the mitochondrial electron transport chain which drives oxidative phosphorylation. The respiratory chain contains 3 multisubunit complexes succinate dehydrogenase (complex II, CII), ubiquinol-cytochrome c oxidoreductase (cytochrome b-c1 complex, complex III, CIII) and cytochrome c oxidase (complex IV, CIV), that cooperate to transfer electrons derived from NADH and succinate to molecular oxygen, creating an electrochemical gradient over the inner membrane that drives transmembrane transport and the ATP synthase. The cytochrome b-c1 complex catalyzes electron transfer from ubiquinol to cytochrome c, linking this redox reaction to translocation of protons across the mitochondrial inner membrane, with protons being carried across the membrane as hydrogens on the quinol. In the process called Q cycle, 2 protons are consumed from the matrix, 4 protons are released into the intermembrane space and 2 electrons are passed to cytochrome c. The Rieske protein is a catalytic core subunit containing a [2Fe-2S] iron-sulfur cluster. It cycles between 2 conformational states during catalysis to transfer electrons from the quinol bound in the Q(0) site in cytochrome b to cytochrome c1. Incorporation of UQCRFS1 is the penultimate step in complex III assembly. Component of the ubiquinol-cytochrome c oxidoreductase (cytochrome b-c1 complex, complex III, CIII). UQCRFS1 undergoes proteolytic processing once it is incorporated in the complex III dimer. One of the fragments, called subunit 9, corresponds to its mitochondrial targeting sequence (MTS). The proteolytic processing is necessary for the correct insertion of UQCRFS1 in the complex III dimer, but the persistence of UQCRFS1-derived fragments may prevent newly imported UQCRFS1 to be processed and assembled into complex III and is detrimental for the complex III structure and function. This chain is Cytochrome b-c1 complex subunit Rieske, mitochondrial (UQCRFS1), found in Saimiri sciureus (Common squirrel monkey).